Consider the following 494-residue polypeptide: DUF21 domain-containing protein At4g14240 (494 aa).

At 1 to 43 (MHLINAVAAARILSGIGQSNGNNGGEAIPFGSFEWITYAGISC) the chain is on the extracellular side. The CNNM transmembrane domain occupies 31-213 (GSFEWITYAG…GKGGELTHDE (183 aa)). The helical transmembrane segment at 44–64 (FLVLFAGIMSGLTLGLMSLGL) threads the bilayer. At 65 to 93 (VELEILQRSGTPNEKKQAAAIFPVVQKQH) the chain is on the cytoplasmic side. Residues 94 to 114 (QLLVTLLLCNAMAMEGLPIYL) traverse the membrane as a helical segment. Residues 115-121 (DKLFNEY) are Extracellular-facing. Residues 122-142 (VAIILSVTFVLAFGEVIPQAI) form a helical membrane-spanning segment. Residues 143–159 (CTRYGLAVGANFVWLVR) are Cytoplasmic-facing. The chain crosses the membrane as a helical span at residues 160–180 (ILMTLCYPIAFPIGKILDLVL). The Extracellular segment spans residues 181 to 494 (GHNDALFRRA…TITEPIRRNN (314 aa)). CBS domains lie at 232–292 (MTPI…TETL), 297–352 (CIRR…SNDS), and 364–425 (GNHD…IVDE). N-linked (GlcNAc...) asparagine glycans are attached at residues N350 and N385. Residues 459–494 (QKGTGGQNKQGQTNKVPGQEQDKMLGTITEPIRRNN) are disordered.

The protein resides in the membrane. In Arabidopsis thaliana (Mouse-ear cress), this protein is DUF21 domain-containing protein At4g14240 (CBSDUF1).